The chain runs to 603 residues: Replication protein A 70 kDa DNA-binding subunit (603 aa).

Positions 131 to 152 (PKPAVTSNSKPIAKKEPSHNNN) are disordered. Position 160 is a phosphoserine (Ser160). The OB DNA-binding region spans 179–252 (WVIKARVTSK…QLKPANKQYS (74 aa)). A Phosphoserine modification is found at Ser420. A C4-type zinc finger spans residues 464–486 (CPQSDCNKKVVDEGNDQFRCEKC).

This sequence belongs to the replication factor A protein 1 family. In terms of assembly, component of the heterotrimeric canonical replication protein A complex (RPA).

It is found in the nucleus. Functionally, as part of the heterotrimeric replication protein A complex (RPA/RP-A), binds and stabilizes single-stranded DNA intermediates, that form during DNA replication or upon DNA stress. It prevents their reannealing and in parallel, recruits and activates different proteins and complexes involved in DNA metabolism. Thereby, it plays an essential role both in DNA replication and the cellular response to DNA damage. This Drosophila melanogaster (Fruit fly) protein is Replication protein A 70 kDa DNA-binding subunit.